Here is a 43-residue protein sequence, read N- to C-terminus: DeltaKappa-actitoxin-Avd4b (43 aa).

Intrachain disulfides connect cysteine 4/cysteine 39, cysteine 6/cysteine 32, and cysteine 22/cysteine 40.

Belongs to the sea anemone type 3 (BDS) potassium channel toxin family.

It is found in the secreted. The protein resides in the nematocyst. Its function is as follows. Acts as a gating modifier on both Kv and Nav ion channels. Voltage-dependently inhibits voltage-gated potassium channels Kv3 (Kv3.1/KCNC1, Kv3.2/KCNC2 and Kv3.4/KCNC4). Slows inactivation of the voltage-gated sodium channel Nav1.7/SCN9A. Inhibits all Kv3.1, Kv3.2 and Kv3.4 by about 50% when tested at a voltage of +40 mV. May act by binding residues in voltage-sensing domains S3b and S4 of Kv3. Tests have been done on human Nav1.7/SCN9A and rat SCG neurons that mostly carry Nav1.7 channels (EC(50)=300 nM). This toxin also reduces blood pressure. The sequence is that of DeltaKappa-actitoxin-Avd4b from Anemonia sulcata (Mediterranean snakelocks sea anemone).